We begin with the raw amino-acid sequence, 506 residues long: Nostrin (506 aa).

In terms of domain architecture, F-BAR spans 1-260 (MRDPLTDCPY…AISKIDIEKD (260 aa)). Serine 114 is modified (phosphoserine). A coiled-coil region spans residues 160–222 (SMTEKEKRKL…LELEKERIQL (63 aa)). The REM-1 domain maps to 292-372 (AMDKERRKSL…SYKLSSMLAE (81 aa)). Residues 438 to 497 (LSSRLCKALYSFQARQDDELNLEKGDIVIIHEKKEGGWWFGSLNGKKGHFPAAYVEELPS) form the SH3 domain. At serine 479 the chain carries Phosphoserine.

As to quaternary structure, homotrimer. Interacts with DAB2. Interacts with NOS3, DNM2, WASL and CAV1. Interacts (via SH3 domain) with DNM2; this interaction allows the recruitment of NOS3 to dynamin-positive structures. As to expression, expressed at highest levels in heart, kidney, placenta and lung, and at lowest levels in brain, thymus and spleen. Present in vascular endothelial cells and placenta. Over-expressed in placenta from women with pre-eclampsia (at protein level).

The protein resides in the cell membrane. Its subcellular location is the cytoplasmic vesicle. The protein localises to the cytoplasm. It is found in the cytoskeleton. It localises to the nucleus. Multivalent adapter protein which may decrease NOS3 activity by inducing its translocation away from the plasma membrane. This Homo sapiens (Human) protein is Nostrin.